Here is a 623-residue protein sequence, read N- to C-terminus: Leucine-rich repeat, immunoglobulin-like domain and transmembrane domain-containing protein 1 (623 aa).

The N-terminal stretch at 1-21 (MRVALGMLWLLALAWPPQARG) is a signal peptide. One can recognise an LRRNT domain in the interval 22–59 (FCPSQCSCSLHIMGDGSKARTVVCNDPDMTLPPASIPP). The Lumenal segment spans residues 22–526 (FCPSQCSCSL…EVVDAENTQQ (505 aa)). LRR repeat units lie at residues 60–81 (DTSRLRLERTAIRRVPGEAFRP), 84–105 (RLEQLWLPYNALSELNALMLRG), 108–129 (RLRELRLPGNRLAAFPWAALRD), 132–153 (KLRLLDLQANRLSAVPAEAARF), and 156–177 (NLTFLDLSSNQLMRLPQELIVS). N-linked (GlcNAc...) asparagine glycosylation occurs at N156. Positions 201-253 (NPWACDCRLYDLVHLLDGWAPNLAFIETELRCASPRSLAGVAFSQLELRKCQG) constitute an LRRCT domain. One can recognise an Ig-like C2-type domain in the interval 266-335 (LLGGTALLRC…YICQAKNFLG (70 aa)). Cysteines 275 and 328 form a disulfide. N-linked (GlcNAc...) asparagine glycans are attached at residues N296 and N455. The Fibronectin type-III domain occupies 430 to 518 (MVRSVKVVGD…QCVIFSTNEV (89 aa)). A helical transmembrane segment spans residues 527–547 (LINVVVISVAIVIALPLTLLV). At 548-623 (CCSALQKRCR…GGRRINEYFC (76 aa)) the chain is on the cytoplasmic side. An LRR 6 repeat occupies 571 to 594 (YVNLERLGYSEDGLEELSRHSVSE).

As to quaternary structure, may form a homodimer. Interacts with LRIT2; may form a heterodimer with LRIT2. Interacts (via its N-terminal extracellular domain) with metabotropic glutamate receptor GRM6. Interacts (via its extreme C-terminus) with the scaffold protein FRMPD2 (via the third PDZ domain); the interaction leads to their colocalization in photoreceptor synapses.

Its subcellular location is the endoplasmic reticulum membrane. The protein localises to the cell projection. The protein resides in the dendrite. In terms of biological role, photoreceptor synaptic protein essential for normal vision. Involved in synapse formation in cone photoreceptor cells. The protein is Leucine-rich repeat, immunoglobulin-like domain and transmembrane domain-containing protein 1 (LRIT1) of Homo sapiens (Human).